Here is a 338-residue protein sequence, read N- to C-terminus: Lipoate-protein ligase A (338 aa).

Positions 29–216 constitute a BPL/LPL catalytic domain; it reads PATQRVLFLW…AFFSHYGERV (188 aa). ATP contacts are provided by residues Arg-71, 76-79, and Lys-134; that span reads GAVF. Residue Lys-134 participates in (R)-lipoate binding.

The protein belongs to the LplA family. Monomer.

Its subcellular location is the cytoplasm. It catalyses the reaction L-lysyl-[lipoyl-carrier protein] + (R)-lipoate + ATP = N(6)-[(R)-lipoyl]-L-lysyl-[lipoyl-carrier protein] + AMP + diphosphate + H(+). Its pathway is protein modification; protein lipoylation via exogenous pathway; protein N(6)-(lipoyl)lysine from lipoate: step 1/2. It participates in protein modification; protein lipoylation via exogenous pathway; protein N(6)-(lipoyl)lysine from lipoate: step 2/2. Catalyzes both the ATP-dependent activation of exogenously supplied lipoate to lipoyl-AMP and the transfer of the activated lipoyl onto the lipoyl domains of lipoate-dependent enzymes. This is Lipoate-protein ligase A from Klebsiella pneumoniae subsp. pneumoniae (strain ATCC 700721 / MGH 78578).